Reading from the N-terminus, the 124-residue chain is S-adenosylmethionine decarboxylase proenzyme (124 aa).

Ser63 acts as the Schiff-base intermediate with substrate; via pyruvic acid in catalysis. The residue at position 63 (Ser63) is a Pyruvic acid (Ser); by autocatalysis. Residue His68 is the Proton acceptor; for processing activity of the active site. Catalysis depends on Cys83, which acts as the Proton donor; for catalytic activity.

It belongs to the prokaryotic AdoMetDC family. Type 1 subfamily. Heterotetramer of two alpha and two beta chains arranged as a dimer of alpha/beta heterodimers. Requires pyruvate as cofactor. Post-translationally, is synthesized initially as an inactive proenzyme. Formation of the active enzyme involves a self-maturation process in which the active site pyruvoyl group is generated from an internal serine residue via an autocatalytic post-translational modification. Two non-identical subunits are generated from the proenzyme in this reaction, and the pyruvate is formed at the N-terminus of the alpha chain, which is derived from the carboxyl end of the proenzyme. The post-translation cleavage follows an unusual pathway, termed non-hydrolytic serinolysis, in which the side chain hydroxyl group of the serine supplies its oxygen atom to form the C-terminus of the beta chain, while the remainder of the serine residue undergoes an oxidative deamination to produce ammonia and the pyruvoyl group blocking the N-terminus of the alpha chain.

The catalysed reaction is S-adenosyl-L-methionine + H(+) = S-adenosyl 3-(methylsulfanyl)propylamine + CO2. Its pathway is amine and polyamine biosynthesis; S-adenosylmethioninamine biosynthesis; S-adenosylmethioninamine from S-adenosyl-L-methionine: step 1/1. Functionally, catalyzes the decarboxylation of S-adenosylmethionine to S-adenosylmethioninamine (dcAdoMet), the propylamine donor required for the synthesis of the polyamines spermine and spermidine from the diamine putrescine. The sequence is that of S-adenosylmethionine decarboxylase proenzyme from Geobacillus kaustophilus (strain HTA426).